Here is a 426-residue protein sequence, read N- to C-terminus: Enolase (426 aa).

Gln-163 is a (2R)-2-phosphoglycerate binding site. Catalysis depends on Glu-205, which acts as the Proton donor. Residues Asp-242, Glu-283, and Asp-310 each contribute to the Mg(2+) site. The (2R)-2-phosphoglycerate site is built by Lys-335, Arg-364, Ser-365, and Lys-386. Lys-335 (proton acceptor) is an active-site residue.

Belongs to the enolase family. Requires Mg(2+) as cofactor.

Its subcellular location is the cytoplasm. The protein resides in the secreted. It is found in the cell surface. The catalysed reaction is (2R)-2-phosphoglycerate = phosphoenolpyruvate + H2O. Its pathway is carbohydrate degradation; glycolysis; pyruvate from D-glyceraldehyde 3-phosphate: step 4/5. Its function is as follows. Catalyzes the reversible conversion of 2-phosphoglycerate (2-PG) into phosphoenolpyruvate (PEP). It is essential for the degradation of carbohydrates via glycolysis. The polypeptide is Enolase (Arthrobacter sp. (strain FB24)).